We begin with the raw amino-acid sequence, 336 residues long: Biotin synthase (336 aa).

The Radical SAM core domain maps to 48 to 277 (VFGDEVEFCS…QAELRLCGGR (230 aa)). Positions 66, 70, and 73 each coordinate [4Fe-4S] cluster. [2Fe-2S] cluster is bound by residues C110, C142, C202, and R272.

The protein belongs to the radical SAM superfamily. Biotin synthase family. Homodimer. Requires [4Fe-4S] cluster as cofactor. The cofactor is [2Fe-2S] cluster.

The enzyme catalyses (4R,5S)-dethiobiotin + (sulfur carrier)-SH + 2 reduced [2Fe-2S]-[ferredoxin] + 2 S-adenosyl-L-methionine = (sulfur carrier)-H + biotin + 2 5'-deoxyadenosine + 2 L-methionine + 2 oxidized [2Fe-2S]-[ferredoxin]. It functions in the pathway cofactor biosynthesis; biotin biosynthesis; biotin from 7,8-diaminononanoate: step 2/2. Functionally, catalyzes the conversion of dethiobiotin (DTB) to biotin by the insertion of a sulfur atom into dethiobiotin via a radical-based mechanism. In Persephonella marina (strain DSM 14350 / EX-H1), this protein is Biotin synthase.